Consider the following 130-residue polypeptide: MEKAKFVIKLILQLALIMLITFIGTEVQKLLHIPLAGSIVGLMLFFLLLQFKIVPESWINVGADFLLKTMVFFFIPSVVGIMDVASNITMNYILFFIVIIIGTCLVALSSGYIAEKMLEKSNTRKGTDHS.

Helical transmembrane passes span 6 to 26 (FVIK…IGTE), 31 to 51 (LHIP…LLQF), 65 to 85 (FLLK…MDVA), and 93 to 113 (ILFF…SGYI).

It belongs to the CidA/LrgA family. CidA subfamily.

It is found in the cell membrane. Increases the activity of extracellular murein hydrolases possibly by mediating their export via hole formation. Inhibited by the antiholin-like proteins LrgAB. In an unstressed cell, the LrgAB products probably inhibit the function of the CidAB proteins. When a cell is stressed by the addition of antibiotics or by other factors in the environment, the CidAB proteins possibly oligomerize within the bacterial cell membrane, creating lesions that disrupt the proton motive force, which in turn results in loss of cell viability. These lesions are also hypothesized to regulate the subsequent cell lysis by either allowing the murein hydrolases access to the cell wall substrate and/or regulating their activity by a possible change in the cell wall pH that results from loss of membrane potential. This chain is Holin-like protein CidA, found in Staphylococcus epidermidis (strain ATCC 35984 / DSM 28319 / BCRC 17069 / CCUG 31568 / BM 3577 / RP62A).